Here is a 248-residue protein sequence, read N- to C-terminus: Undecaprenyl-diphosphatase (248 aa).

The next 8 membrane-spanning stretches (helical) occupy residues 4-24 (IVLG…SGHL), 40-60 (FAFL…KEIV), 74-94 (YSLV…GFLF), 101-121 (SFSN…SLFV), 134-154 (ISYI…FPGI), 174-194 (ALKY…ILET), 201-221 (SYIL…LLIL), and 228-248 (KKLK…FFVG).

Belongs to the UppP family.

The protein localises to the cell inner membrane. The enzyme catalyses di-trans,octa-cis-undecaprenyl diphosphate + H2O = di-trans,octa-cis-undecaprenyl phosphate + phosphate + H(+). In terms of biological role, catalyzes the dephosphorylation of undecaprenyl diphosphate (UPP). Confers resistance to bacitracin. The chain is Undecaprenyl-diphosphatase from Thermosipho africanus (strain TCF52B).